We begin with the raw amino-acid sequence, 236 residues long: Purine nucleoside phosphorylase DeoD-type (236 aa).

His4 is a binding site for a purine D-ribonucleoside. Residues Gly20, Arg24, Arg43, and 87–90 (RVGS) each bind phosphate. A purine D-ribonucleoside is bound by residues 179-181 (EME) and 203-204 (SD). The active-site Proton donor is Asp204.

Belongs to the PNP/UDP phosphorylase family. Homohexamer; trimer of homodimers.

The catalysed reaction is a purine D-ribonucleoside + phosphate = a purine nucleobase + alpha-D-ribose 1-phosphate. It catalyses the reaction a purine 2'-deoxy-D-ribonucleoside + phosphate = a purine nucleobase + 2-deoxy-alpha-D-ribose 1-phosphate. Its function is as follows. Catalyzes the reversible phosphorolytic breakdown of the N-glycosidic bond in the beta-(deoxy)ribonucleoside molecules, with the formation of the corresponding free purine bases and pentose-1-phosphate. This Limosilactobacillus reuteri (strain DSM 20016) (Lactobacillus reuteri) protein is Purine nucleoside phosphorylase DeoD-type.